The chain runs to 36 residues: MLTIYIMLNNYKSVILSPFPCCVLKSYLTVIYISFL.

The chain crosses the membrane as a helical span at residues 13 to 35 (SVILSPFPCCVLKSYLTVIYISF).

It localises to the host membrane. This is an uncharacterized protein from Pseudoalteromonas espejiana (Bacteriophage PM2).